Consider the following 442-residue polypeptide: C4-dicarboxylate transport protein (442 aa).

Helical transmembrane passes span 10–30, 40–60, 77–97, 149–169, 185–205, 221–241, 288–308, and 354–374; these read VQVL…PSFG, FIKL…VSGI, LIYF…VANI, LLQV…LGTL, FVIL…AMAF, LMVA…GLIA, VVGL…SIYL, and AATL…ILGI. Positions 420–442 are disordered; it reads PATPEVAAEERGEGRGLDGPLPA.

Belongs to the dicarboxylate/amino acid:cation symporter (DAACS) (TC 2.A.23) family.

Its subcellular location is the cell membrane. Responsible for the transport of dicarboxylates such as succinate, fumarate, and malate across the membrane. This Deinococcus geothermalis (strain DSM 11300 / CIP 105573 / AG-3a) protein is C4-dicarboxylate transport protein.